The chain runs to 428 residues: Cytochrome c biogenesis protein CcsB (428 aa).

A run of 3 helical transmembrane segments spans residues 14 to 34 (LRFA…GTFI), 72 to 92 (SFWF…CSFR), and 162 to 182 (IGPL…AYGS).

The protein belongs to the Ccs1/CcsB family. In terms of assembly, may interact with CcsA.

It is found in the cellular thylakoid membrane. Its function is as follows. Required during biogenesis of c-type cytochromes (cytochrome c6 and cytochrome f) at the step of heme attachment. The protein is Cytochrome c biogenesis protein CcsB of Prochlorococcus marinus (strain AS9601).